Consider the following 376-residue polypeptide: NifS-like protein (376 aa).

Pyridoxal 5'-phosphate-binding positions include 58–59 and 184–186; these read SE and SLN.

The protein belongs to the class-V pyridoxal-phosphate-dependent aminotransferase family. NifS/IscS subfamily. The cofactor is pyridoxal 5'-phosphate.

It localises to the virion. In African swine fever virus (isolate Tick/Malawi/Lil 20-1/1983) (ASFV), this protein is NifS-like protein.